Consider the following 97-residue polypeptide: U6-theraphotoxin-Hhn1a 2 (97 aa).

An N-terminal signal peptide occupies residues 1 to 33 (MLIKQFSRRPKNMKVQILLAFAALFVLAVGSYA). Residues 34 to 61 (SESKKLDLRDASFSAMFSADYQLNPQER) constitute a propeptide that is removed on maturation. 3 cysteine pairs are disulfide-bonded: cysteine 63–cysteine 77, cysteine 70–cysteine 82, and cysteine 76–cysteine 89.

Belongs to the neurotoxin 10 (Hwtx-1) family. 12 (Hntx-12) subfamily. As to expression, expressed by the venom gland.

It localises to the secreted. In terms of biological role, ion channel inhibitor. The chain is U6-theraphotoxin-Hhn1a 2 from Cyriopagopus hainanus (Chinese bird spider).